The sequence spans 607 residues: Arginine--tRNA ligase (607 aa).

The 'HIGH' region motif lies at 147–157; that stretch reads PNIAKEMHVGH.

The protein belongs to the class-I aminoacyl-tRNA synthetase family. As to quaternary structure, monomer.

The protein resides in the cytoplasm. The catalysed reaction is tRNA(Arg) + L-arginine + ATP = L-arginyl-tRNA(Arg) + AMP + diphosphate. The chain is Arginine--tRNA ligase from Prochlorococcus marinus (strain NATL1A).